The primary structure comprises 396 residues: Subtelomeric hrmA-associated cluster protein AFUB_079040 (396 aa).

2 disordered regions span residues Met1–Leu32 and Tyr347–Arg396. Positions Ser23–Leu32 are enriched in polar residues. The span at Ser367 to Lys380 shows a compositional bias: basic residues.

Part of the subtelomeric hrmA-associated cluster (HAC) containing genes that alter the hyphal surface (such as reduced total chitin or increased beta-glucan exposure) and perturb inter-hyphal interactions within the developing biofilms, resulting in a loss of vertically aligned polarized growing filaments. Consequently, this hypoxia-typic morphotype (called H-MORPH) with altered biofilm architecture leads to increased hypoxia fitness, increased host inflammation, rapid disease progression, and mortality in a murine model of invasive aspergillosis. This is Subtelomeric hrmA-associated cluster protein AFUB_079040 from Aspergillus fumigatus (strain CBS 144.89 / FGSC A1163 / CEA10) (Neosartorya fumigata).